Consider the following 564-residue polypeptide: Proline--tRNA ligase (564 aa).

This sequence belongs to the class-II aminoacyl-tRNA synthetase family. ProS type 1 subfamily. As to quaternary structure, homodimer.

The protein resides in the cytoplasm. It carries out the reaction tRNA(Pro) + L-proline + ATP = L-prolyl-tRNA(Pro) + AMP + diphosphate. Its function is as follows. Catalyzes the attachment of proline to tRNA(Pro) in a two-step reaction: proline is first activated by ATP to form Pro-AMP and then transferred to the acceptor end of tRNA(Pro). As ProRS can inadvertently accommodate and process non-cognate amino acids such as alanine and cysteine, to avoid such errors it has two additional distinct editing activities against alanine. One activity is designated as 'pretransfer' editing and involves the tRNA(Pro)-independent hydrolysis of activated Ala-AMP. The other activity is designated 'posttransfer' editing and involves deacylation of mischarged Ala-tRNA(Pro). The misacylated Cys-tRNA(Pro) is not edited by ProRS. The polypeptide is Proline--tRNA ligase (Xylella fastidiosa (strain 9a5c)).